A 240-amino-acid chain; its full sequence is Ubiquinone biosynthesis O-methyltransferase (240 aa).

Residues arginine 44, glycine 64, aspartate 85, and methionine 129 each coordinate S-adenosyl-L-methionine.

The protein belongs to the methyltransferase superfamily. UbiG/COQ3 family.

It carries out the reaction a 3-demethylubiquinol + S-adenosyl-L-methionine = a ubiquinol + S-adenosyl-L-homocysteine + H(+). It catalyses the reaction a 3-(all-trans-polyprenyl)benzene-1,2-diol + S-adenosyl-L-methionine = a 2-methoxy-6-(all-trans-polyprenyl)phenol + S-adenosyl-L-homocysteine + H(+). Its pathway is cofactor biosynthesis; ubiquinone biosynthesis. Its function is as follows. O-methyltransferase that catalyzes the 2 O-methylation steps in the ubiquinone biosynthetic pathway. This Escherichia coli (strain ATCC 8739 / DSM 1576 / NBRC 3972 / NCIMB 8545 / WDCM 00012 / Crooks) protein is Ubiquinone biosynthesis O-methyltransferase.